The primary structure comprises 433 residues: Beta-agarase AgaA (433 aa).

The N-terminal stretch at 1–20 (MRKITSILLTCVMGCTATYA) is a signal peptide. A GH16 domain is found at 21–295 (ADWDGVPVPA…WVRFYKPVPI (275 aa)). The active-site Nucleophile is the glutamate 147. Catalysis depends on glutamate 152, which acts as the Proton donor. A CBM6 domain is found at 300–431 (TTVELGNFHN…QWNGDEIRFV (132 aa)).

This sequence belongs to the glycosyl hydrolase 16 family. Monomer.

It is found in the periplasm. It carries out the reaction Hydrolysis of (1-&gt;4)-beta-D-galactosidic linkages in agarose, giving the tetramer as the predominant product.. Its activity is regulated as follows. Activity is abolished by Hg(2+), Cu(2+), Pb(2+) and Zn(2+) ions, but is not affected by NaCl up to at least 1.0 M, Mg(2+), K(+) and Ca(2+). Not affected by iodoacetamide, p-chloromercuribenzoate, dithiothreitol, 2-mercaptoethanol, EDTA and sodium dodecyl sulfate. Inhibited by N-bromosuccinimide. In terms of biological role, endo-type beta-agarase, which produces neoagarotetraose (NA4) as the main final product, with a small amount of neoagarohexaose (NA6) and neoagarobiose (NA2). The chain is Beta-agarase AgaA from Microbulbifer thermotolerans.